A 156-amino-acid polypeptide reads, in one-letter code: Ribonuclease H (156 aa).

An RNase H type-1 domain is found at 1 to 142 (MNKQVEIFTD…CDELARQAAE (142 aa)). Mg(2+) is bound by residues aspartate 10, glutamate 48, aspartate 70, and aspartate 134. The disordered stretch occupies residues 135–156 (ELARQAAENPTEDDIGYQPEPQ).

Belongs to the RNase H family. Monomer. The cofactor is Mg(2+).

Its subcellular location is the cytoplasm. It catalyses the reaction Endonucleolytic cleavage to 5'-phosphomonoester.. Functionally, endonuclease that specifically degrades the RNA of RNA-DNA hybrids. In Vibrio cholerae serotype O1 (strain M66-2), this protein is Ribonuclease H.